Here is a 515-residue protein sequence, read N- to C-terminus: GMP synthase [glutamine-hydrolyzing] (515 aa).

A Glutamine amidotransferase type-1 domain is found at 6 to 198; the sequence is KVIIIDYGSQ…LFHVAKLKAD (193 aa). Catalysis depends on C83, which acts as the Nucleophile. Active-site residues include H172 and E174. A GMPS ATP-PPase domain is found at 199 to 390; that stretch reads WTMSSFVERA…LGLPDFIIWR (192 aa). Position 226-232 (226-232) interacts with ATP; the sequence is SGGIDST.

In terms of assembly, homodimer.

The enzyme catalyses XMP + L-glutamine + ATP + H2O = GMP + L-glutamate + AMP + diphosphate + 2 H(+). It functions in the pathway purine metabolism; GMP biosynthesis; GMP from XMP (L-Gln route): step 1/1. In terms of biological role, catalyzes the synthesis of GMP from XMP. This chain is GMP synthase [glutamine-hydrolyzing], found in Nitratidesulfovibrio vulgaris (strain DSM 19637 / Miyazaki F) (Desulfovibrio vulgaris).